The chain runs to 94 residues: MFGLINIGFGNVIAGDRIVAIVNPESAPLKRLKEDAKEEGKLIDATYGRKTRAILISDSNHIILSAIQPETIAQRFMQSFFEIEEQLDKIRRKG.

This sequence belongs to the RemA family.

This Thermosipho africanus (strain TCF52B) protein is Putative regulatory protein THA_332.